The primary structure comprises 121 residues: Basic phospholipase A2 BbTX-III (121 aa).

Residues Tyr27, Gly29, and Gly31 each contribute to the Ca(2+) site. Disulfide bonds link Cys28/Cys44, Cys43/Cys95, Cys49/Cys121, Cys50/Cys88, Cys58/Cys82, and Cys76/Cys86. Residue His47 is part of the active site. Asp48 is a binding site for Ca(2+). The active site involves Asp89.

This sequence belongs to the phospholipase A2 family. Group II subfamily. D49 sub-subfamily. Homodimer; non-covalently linked. It depends on Ca(2+) as a cofactor. As to expression, expressed by the venom gland.

It is found in the secreted. The catalysed reaction is a 1,2-diacyl-sn-glycero-3-phosphocholine + H2O = a 1-acyl-sn-glycero-3-phosphocholine + a fatty acid + H(+). Its function is as follows. Snake venom phospholipase A2 (PLA2) that exhibits myotoxin and anticoagulant activity. Displays edema-inducing activities in mouse paw. Also displays cytotoxic activity against some cell lines and myotubes, and antimicrobial activities against E.coli, C.albicans and Leishmania. PLA2 catalyzes the calcium-dependent hydrolysis of the 2-acyl groups in 3-sn-phosphoglycerides. In Bothrops brazili (Brazil's lancehead), this protein is Basic phospholipase A2 BbTX-III.